Here is a 475-residue protein sequence, read N- to C-terminus: Aspartyl/glutamyl-tRNA(Asn/Gln) amidotransferase subunit B (475 aa).

Belongs to the GatB/GatE family. GatB subfamily. As to quaternary structure, heterotrimer of A, B and C subunits.

It catalyses the reaction L-glutamyl-tRNA(Gln) + L-glutamine + ATP + H2O = L-glutaminyl-tRNA(Gln) + L-glutamate + ADP + phosphate + H(+). The catalysed reaction is L-aspartyl-tRNA(Asn) + L-glutamine + ATP + H2O = L-asparaginyl-tRNA(Asn) + L-glutamate + ADP + phosphate + 2 H(+). Allows the formation of correctly charged Asn-tRNA(Asn) or Gln-tRNA(Gln) through the transamidation of misacylated Asp-tRNA(Asn) or Glu-tRNA(Gln) in organisms which lack either or both of asparaginyl-tRNA or glutaminyl-tRNA synthetases. The reaction takes place in the presence of glutamine and ATP through an activated phospho-Asp-tRNA(Asn) or phospho-Glu-tRNA(Gln). This is Aspartyl/glutamyl-tRNA(Asn/Gln) amidotransferase subunit B from Chlorobium phaeobacteroides (strain BS1).